Consider the following 234-residue polypeptide: Probable transcriptional regulatory protein Psyr_3028 (234 aa).

The protein belongs to the TACO1 family.

It is found in the cytoplasm. This is Probable transcriptional regulatory protein Psyr_3028 from Pseudomonas syringae pv. syringae (strain B728a).